We begin with the raw amino-acid sequence, 81 residues long: Photosystem I iron-sulfur center (81 aa).

2 4Fe-4S ferredoxin-type domains span residues 1–31 (MSHSVKIYDTCIGCTQCVRACPLDVLEMVPW) and 39–68 (IASSPRTEDCIGCKRCETACPTDFLSIRVY). Residues Cys-11, Cys-14, Cys-17, Cys-21, Cys-48, Cys-51, Cys-54, and Cys-58 each contribute to the [4Fe-4S] cluster site.

In terms of assembly, the cyanobacterial PSI reaction center is composed of one copy each of PsaA,B,C,D,E,F,I,J,K,L,M and X, and forms trimeric complexes. [4Fe-4S] cluster is required as a cofactor.

The protein resides in the cellular thylakoid membrane. It carries out the reaction reduced [plastocyanin] + hnu + oxidized [2Fe-2S]-[ferredoxin] = oxidized [plastocyanin] + reduced [2Fe-2S]-[ferredoxin]. Functionally, apoprotein for the two 4Fe-4S centers FA and FB of photosystem I (PSI); essential for photochemical activity. FB is the terminal electron acceptor of PSI, donating electrons to ferredoxin. The C-terminus interacts with PsaA/B/D and helps assemble the protein into the PSI complex. Required for binding of PsaD and PsaE to PSI. PSI is a plastocyanin/cytochrome c6-ferredoxin oxidoreductase, converting photonic excitation into a charge separation, which transfers an electron from the donor P700 chlorophyll pair to the spectroscopically characterized acceptors A0, A1, FX, FA and FB in turn. The polypeptide is Photosystem I iron-sulfur center (Microcystis aeruginosa (strain NIES-843 / IAM M-2473)).